A 142-amino-acid chain; its full sequence is Transcriptional regulator MraZ (142 aa).

SpoVT-AbrB domains are found at residues alanine 5–glutamate 51 and alanine 77–threonine 120.

This sequence belongs to the MraZ family. As to quaternary structure, forms oligomers.

It localises to the cytoplasm. The protein resides in the nucleoid. This Variovorax paradoxus (strain S110) protein is Transcriptional regulator MraZ.